Consider the following 327-residue polypeptide: Complex I intermediate-associated protein 30, mitochondrial (327 aa).

A mitochondrion-targeting transit peptide spans 1-24 (MALVHKLLRGTYFLRKFXKPTSAL). The interval 42 to 63 (PVASPGKASSQRKTEGDLQGDH) is disordered. The segment covering 53–63 (RKTEGDLQGDH) has biased composition (basic and acidic residues). Position 318 is a phosphoserine (serine 318).

Belongs to the CIA30 family. As to quaternary structure, part of the mitochondrial complex I assembly/MCIA complex that comprises at least the core subunits TMEM126B, NDUFAF1, ECSIT and ACAD9 and complement subunits such as COA1 and TMEM186. Interacts with ECSIT. Interacts with ACAD9. At early stages of complex I assembly, it is found in intermediate subcomplexes that contain different subunits including NDUFB6, NDUFA6, NDUFA9, NDUFS3, NDUFS7, ND1, ND2 and ND3. Interacts with TMEM70 and TMEM242.

Its subcellular location is the mitochondrion. The protein localises to the mitochondrion matrix. As part of the MCIA complex, involved in the assembly of the mitochondrial complex I. This is Complex I intermediate-associated protein 30, mitochondrial from Pan troglodytes (Chimpanzee).